The following is a 387-amino-acid chain: MEQVVIVDAIRTPMGRSKGGAFRNVRAEDLSAHLMRSLLARNPALEAAALDDIYWGCVQQTLEQGFNIARNAALLAEVPHSVPAVTVNRLCGSSMQALHDAARMIMTGDAQACLVGGVEHMGHVPMSHGVDFHPGLSRNVAKAAGMMGLTAEMLARMHGISREMQDAFAARSHARAWAATQSGAFKNEIIPTGGHDADGVLKQFNYDEVIRPETTVEALATLRPAFDPVNGTVTAGTSSALSDGAAAMLVMSESRAHELGLKPRARVRSMAVVGCNPSIMGYGPVPASKLALKKAGLSASDIGVFEMNEAFAAQILPCIKDLGLMEQIDEKINLNGGAIALGHPLGCSGARISTTLLNLMERKDVQFGLATMCIGLGQGIATVFERV.

The active-site Acyl-thioester intermediate is the Cys91. Residues His343 and Cys373 each act as proton acceptor in the active site.

Belongs to the thiolase-like superfamily. Thiolase family. In terms of assembly, heterotetramer of two alpha chains (FadB) and two beta chains (FadA).

It is found in the cytoplasm. The catalysed reaction is an acyl-CoA + acetyl-CoA = a 3-oxoacyl-CoA + CoA. It functions in the pathway lipid metabolism; fatty acid beta-oxidation. Its function is as follows. Catalyzes the final step of fatty acid oxidation in which acetyl-CoA is released and the CoA ester of a fatty acid two carbons shorter is formed. This chain is 3-ketoacyl-CoA thiolase, found in Shigella boydii serotype 4 (strain Sb227).